The sequence spans 382 residues: Chorismate synthase (382 aa).

2 residues coordinate NADP(+): arginine 39 and arginine 45. FMN contacts are provided by residues 127 to 129 (RAS), 245 to 246 (QA), glycine 290, 305 to 309 (KPIPT), and arginine 331.

It belongs to the chorismate synthase family. As to quaternary structure, homotetramer. It depends on FMNH2 as a cofactor.

The enzyme catalyses 5-O-(1-carboxyvinyl)-3-phosphoshikimate = chorismate + phosphate. It functions in the pathway metabolic intermediate biosynthesis; chorismate biosynthesis; chorismate from D-erythrose 4-phosphate and phosphoenolpyruvate: step 7/7. Functionally, catalyzes the anti-1,4-elimination of the C-3 phosphate and the C-6 proR hydrogen from 5-enolpyruvylshikimate-3-phosphate (EPSP) to yield chorismate, which is the branch point compound that serves as the starting substrate for the three terminal pathways of aromatic amino acid biosynthesis. This reaction introduces a second double bond into the aromatic ring system. This chain is Chorismate synthase, found in Desulfitobacterium hafniense (strain DSM 10664 / DCB-2).